Consider the following 101-residue polypeptide: Small ribosomal subunit protein uS14 (101 aa).

Belongs to the universal ribosomal protein uS14 family. As to quaternary structure, part of the 30S ribosomal subunit. Contacts proteins S3 and S10.

In terms of biological role, binds 16S rRNA, required for the assembly of 30S particles and may also be responsible for determining the conformation of the 16S rRNA at the A site. The protein is Small ribosomal subunit protein uS14 of Stenotrophomonas maltophilia (strain K279a).